We begin with the raw amino-acid sequence, 1087 residues long: Exportin-7 (1087 aa).

An Importin N-terminal domain is found at 30–96 (AEKALVEFTN…RNYVLNYLAT (67 aa)).

The protein belongs to the exportin family.

The protein localises to the cytoplasm. It localises to the nucleus. In terms of biological role, mediates the nuclear export of proteins (cargos) with broad substrate specificity. In Gallus gallus (Chicken), this protein is Exportin-7 (XPO7).